The sequence spans 202 residues: uncharacterized protein (202 aa).

This is an uncharacterized protein from Methanocaldococcus jannaschii (strain ATCC 43067 / DSM 2661 / JAL-1 / JCM 10045 / NBRC 100440) (Methanococcus jannaschii).